The primary structure comprises 225 residues: UPF0758 protein NGK_1225 (225 aa).

The MPN domain occupies T102–M224. Positions 173, 175, and 186 each coordinate Zn(2+). Residues H173–D186 carry the JAMM motif motif.

The protein belongs to the UPF0758 family.

This chain is UPF0758 protein NGK_1225, found in Neisseria gonorrhoeae (strain NCCP11945).